The primary structure comprises 421 residues: NAD-specific glutamate dehydrogenase (421 aa).

Substrate-binding residues include lysine 71 and lysine 95. Lysine 107 (proton donor) is an active-site residue. Positions 191 and 222 each coordinate NAD(+). Serine 355 contributes to the substrate binding site.

Belongs to the Glu/Leu/Phe/Val dehydrogenases family. As to quaternary structure, homohexamer.

The catalysed reaction is L-glutamate + NAD(+) + H2O = 2-oxoglutarate + NH4(+) + NADH + H(+). The sequence is that of NAD-specific glutamate dehydrogenase (gluD) from Clostridioides difficile (Peptoclostridium difficile).